Reading from the N-terminus, the 276-residue chain is Large ribosomal subunit protein uL2c (276 aa).

A disordered region spans residues 221 to 276 (RGSVMNPVDHPHGGGEGRAPIGRSRPVTPWGKPALGQKTRKPKKQSNKLILRKRKK). Positions 258 to 276 (KTRKPKKQSNKLILRKRKK) are enriched in basic residues.

The protein belongs to the universal ribosomal protein uL2 family. As to quaternary structure, part of the 50S ribosomal subunit.

The protein resides in the plastid. It is found in the chloroplast. This chain is Large ribosomal subunit protein uL2c (rpl2), found in Stigeoclonium helveticum (Green alga).